Consider the following 62-residue polypeptide: Large ribosomal subunit protein uL30 (62 aa).

It belongs to the universal ribosomal protein uL30 family. Part of the 50S ribosomal subunit.

The protein is Large ribosomal subunit protein uL30 of Alkalilimnicola ehrlichii (strain ATCC BAA-1101 / DSM 17681 / MLHE-1).